The chain runs to 156 residues: 6,7-dimethyl-8-ribityllumazine synthase (156 aa).

Residues Phe22, 57–59, and 81–83 contribute to the 5-amino-6-(D-ribitylamino)uracil site; these read AYE and TVI. 86–87 contributes to the (2S)-2-hydroxy-3-oxobutyl phosphate binding site; the sequence is GT. Catalysis depends on His89, which acts as the Proton donor. Residue Phe114 coordinates 5-amino-6-(D-ribitylamino)uracil. Arg128 contacts (2S)-2-hydroxy-3-oxobutyl phosphate.

The protein belongs to the DMRL synthase family. Forms an icosahedral capsid composed of 60 subunits, arranged as a dodecamer of pentamers.

It catalyses the reaction (2S)-2-hydroxy-3-oxobutyl phosphate + 5-amino-6-(D-ribitylamino)uracil = 6,7-dimethyl-8-(1-D-ribityl)lumazine + phosphate + 2 H2O + H(+). It participates in cofactor biosynthesis; riboflavin biosynthesis; riboflavin from 2-hydroxy-3-oxobutyl phosphate and 5-amino-6-(D-ribitylamino)uracil: step 1/2. Functionally, catalyzes the formation of 6,7-dimethyl-8-ribityllumazine by condensation of 5-amino-6-(D-ribitylamino)uracil with 3,4-dihydroxy-2-butanone 4-phosphate. This is the penultimate step in the biosynthesis of riboflavin. This is 6,7-dimethyl-8-ribityllumazine synthase from Enterobacter sp. (strain 638).